Reading from the N-terminus, the 475-residue chain is MLNGQKEYRVEKDFLGEKQIEADVYYGIQTLRASENFPITGYKIHEEMINALAIVKKAAALANMDVKRLYEGIGQAIVQAADEILEGKWHDQFIVDPIQGGAGTSMNMNANEVIGNRALEIMGHKKGDYIHLSPNTHVNMSQSTNDVFPTAIHISTLKLLEKLLKTMEDMHSVFKQKAQEFDSVIKMGRTHLQDAVPIRLGQEFEAYSRVLERDIKRIKQSRQHLYEVNMGATAVGTGLNADPEYIKQVVKHLADISGLPLVGADHLVDATQNTDAYTEVSASLKVCMMNMSKIANDLRLMASGPRAGLAEISLPARQPGSSIMPGKVNPVMAELINQIAFQVIGNDNTICLASEAGQLELNVMEPVLVFNLLQSISIMNNGFRSFTDNCLKGIEANEKRMKQYVEKSAGVITAVNPHLGYEAAARIAREAIMTGQSVRDLCLQHDVLTEEELDIILNPYEMTKPGIAGKELLEK.

L-aspartate is bound by residues threonine 104, serine 143, threonine 144, asparagine 145, threonine 190, and histidine 191. The SS loop stretch occupies residues 320–329; the sequence is GSSIMPGKVN. Serine 321 functions as the Proton acceptor in the catalytic mechanism. Residues serine 322 and lysine 327 each coordinate L-aspartate.

It belongs to the class-II fumarase/aspartase family. Aspartase subfamily. Homotetramer.

It catalyses the reaction L-aspartate = fumarate + NH4(+). In terms of biological role, catalyzes the reversible conversion of L-aspartate to fumarate and ammonia. This chain is Aspartate ammonia-lyase, found in Bacillus subtilis (strain 168).